The following is a 100-amino-acid chain: ESAT-6-like protein EsxT (100 aa).

This sequence belongs to the WXG100 family. ESAT-6 subfamily. Forms a tight 1:1 complex with EsxU.

Its subcellular location is the secreted. The polypeptide is ESAT-6-like protein EsxT (Mycobacterium tuberculosis (strain CDC 1551 / Oshkosh)).